The following is a 218-amino-acid chain: MLMYLLKYYPKILFIIEGTLVTLKYSVIAVILGLVIGMLLAICKVNKNRVLRLFANFYTSIFRGTPLLVQLSIIYFAAPYIINIKFNVFMAGVISFALNSGAYVSEVIRAGINTVDKGQFEAAEALAIPKFLIMKDIILPQAINNIFPSLVNELVNLIKESAIISMLGEMDLMRRAQIVSIETYNYFFPMLIAACCYYILVILISFIAKIIEKKMIVN.

The region spanning 19–208 (TLVTLKYSVI…ILVILISFIA (190 aa)) is the ABC transmembrane type-1 domain. 4 helical membrane-spanning segments follow: residues 25–45 (YSVI…ICKV), 57–79 (FYTS…FAAP), 86–108 (FNVF…SEVI), and 187–207 (FFPM…ISFI).

This sequence belongs to the binding-protein-dependent transport system permease family. HisMQ subfamily.

It is found in the cell inner membrane. Part of the binding-protein-dependent transport system for glutamine; probably responsible for the translocation of the substrate across the membrane. The chain is Putative glutamine transport system permease protein GlnP (glnP) from Rickettsia prowazekii (strain Madrid E).